Here is a 68-residue protein sequence, read N- to C-terminus: SERF-like protein YDL085C-A (68 aa).

Basic and acidic residues-rich tracts occupy residues Met1–Arg43 and Asp50–Arg68. The tract at residues Met1–Arg68 is disordered. At Ser37 the chain carries Phosphoserine.

This sequence belongs to the SERF family.

Its subcellular location is the cytoplasm. The protein resides in the nucleus. This Saccharomyces cerevisiae (strain ATCC 204508 / S288c) (Baker's yeast) protein is SERF-like protein YDL085C-A.